Here is a 426-residue protein sequence, read N- to C-terminus: D-tagatose-1,6-bisphosphate aldolase subunit KbaZ (426 aa).

It belongs to the GatZ/KbaZ family. KbaZ subfamily. As to quaternary structure, forms a complex with KbaY.

Its pathway is carbohydrate metabolism; D-tagatose 6-phosphate degradation; D-glyceraldehyde 3-phosphate and glycerone phosphate from D-tagatose 6-phosphate: step 2/2. Its function is as follows. Component of the tagatose-1,6-bisphosphate aldolase KbaYZ that is required for full activity and stability of the Y subunit. Could have a chaperone-like function for the proper and stable folding of KbaY. When expressed alone, KbaZ does not show any aldolase activity. In Escherichia coli O139:H28 (strain E24377A / ETEC), this protein is D-tagatose-1,6-bisphosphate aldolase subunit KbaZ.